Consider the following 268-residue polypeptide: Undecaprenyl-diphosphatase (268 aa).

7 helical membrane passes run 47–67 (FAVLIQLGAILAILSIYFAKL), 83–103 (FVIGVLVAFLPAAMIGAVAGS), 109–129 (LFNPWVVCFSLIVGGAILLWV), 144–164 (FPLPMYFYIGCAQCLAMIPGV), 184–204 (AAEFSFFLAIPTMVGAFVYDF), 218–238 (IVAIGFVVSFITAVIVVKTFL), and 246–266 (FELFAWWRVIVGTLGLIALAM).

Belongs to the UppP family.

The protein resides in the cell inner membrane. It carries out the reaction di-trans,octa-cis-undecaprenyl diphosphate + H2O = di-trans,octa-cis-undecaprenyl phosphate + phosphate + H(+). Functionally, catalyzes the dephosphorylation of undecaprenyl diphosphate (UPP). Confers resistance to bacitracin. This chain is Undecaprenyl-diphosphatase, found in Rhodopseudomonas palustris (strain BisB5).